The following is a 126-amino-acid chain: Small ribosomal subunit protein uS12 (126 aa).

Aspartate 89 carries the post-translational modification 3-methylthioaspartic acid.

This sequence belongs to the universal ribosomal protein uS12 family. As to quaternary structure, part of the 30S ribosomal subunit. Contacts proteins S8 and S17. May interact with IF1 in the 30S initiation complex.

In terms of biological role, with S4 and S5 plays an important role in translational accuracy. Functionally, interacts with and stabilizes bases of the 16S rRNA that are involved in tRNA selection in the A site and with the mRNA backbone. Located at the interface of the 30S and 50S subunits, it traverses the body of the 30S subunit contacting proteins on the other side and probably holding the rRNA structure together. The combined cluster of proteins S8, S12 and S17 appears to hold together the shoulder and platform of the 30S subunit. In Sulfurimonas denitrificans (strain ATCC 33889 / DSM 1251) (Thiomicrospira denitrificans (strain ATCC 33889 / DSM 1251)), this protein is Small ribosomal subunit protein uS12.